Consider the following 527-residue polypeptide: Sulfate adenylyltransferase (527 aa).

An N-terminal region spans residues methionine 1–tyrosine 176. The catalytic stretch occupies residues aspartate 177–lysine 406. A sulfate-binding site is contributed by glutamine 206. ATP is bound by residues glutamine 206–asparagine 209 and glycine 302–histidine 305. Active-site residues include threonine 207, arginine 208, and asparagine 209. Position 208 (arginine 208) interacts with sulfate. Position 306 (alanine 306) interacts with sulfate. Valine 344 contributes to the ATP binding site. Positions glutamine 407–tyrosine 527 are required for oligomerization; adenylyl-sulfate kinase-like.

Belongs to the sulfate adenylyltransferase family. In terms of assembly, homohexamer. Dimer of trimers.

The protein resides in the cytoplasm. The enzyme catalyses sulfate + ATP + H(+) = adenosine 5'-phosphosulfate + diphosphate. The protein operates within sulfur metabolism; hydrogen sulfide biosynthesis; sulfite from sulfate: step 1/3. Its function is as follows. Catalyzes the first intracellular reaction of sulfate assimilation, forming adenosine-5'-phosphosulfate (APS) from inorganic sulfate and ATP. Plays an important role in sulfate activation as a component of the biosynthesis pathway of sulfur-containing amino acids. The sequence is that of Sulfate adenylyltransferase from Candida albicans (strain SC5314 / ATCC MYA-2876) (Yeast).